Consider the following 199-residue polypeptide: Thymidine kinase (199 aa).

Residues 15-22 and 88-91 contribute to the ATP site; these read GSMFSGKS and DEVQ. E89 acts as the Proton acceptor in catalysis. C145, C148, C183, and H186 together coordinate Zn(2+).

Belongs to the thymidine kinase family. In terms of assembly, homotetramer.

The protein resides in the cytoplasm. It carries out the reaction thymidine + ATP = dTMP + ADP + H(+). This Staphylococcus aureus (strain Mu50 / ATCC 700699) protein is Thymidine kinase.